A 67-amino-acid chain; its full sequence is Transcription elongation factor Spt4 (67 aa).

Residues Cys7, Cys10, Cys19, and Cys22 each coordinate Zn(2+).

It belongs to the archaeal Spt4 family. Heterodimer composed of Spt4 and Spt5. Interacts with RNA polymerase (RNAP). The complex interacts with FttA.

The protein resides in the chromosome. Its function is as follows. The Stp4-Spt5 complex stimulates transcription elongation on both naked DNA and histone-bound DNA (chromatin), facilitating transcription through the histone barrier. Neither protein functions alone. The complex also stimulates the transcription termination activity of FttA, neither protein alone stimulates FttA-dependent termination. This chain is Transcription elongation factor Spt4, found in Thermococcus kodakarensis (strain ATCC BAA-918 / JCM 12380 / KOD1) (Pyrococcus kodakaraensis (strain KOD1)).